A 343-amino-acid chain; its full sequence is Nicotianamine synthase 3 (343 aa).

This sequence belongs to the nicotianamine synthase (NAS)-like family. As to expression, expressed in leaves.

The enzyme catalyses 3 S-adenosyl-L-methionine = nicotianamine + 3 S-methyl-5'-thioadenosine + 3 H(+). In terms of biological role, synthesizes nicotianamine, a polyamine that is the first intermediate in the synthesis of the phytosiderophores of the mugineic acid type found in gramineae which serve as a sensor for the physiological iron status within the plant, and/or might be involved in the transport of iron. In Oryza sativa subsp. indica (Rice), this protein is Nicotianamine synthase 3 (NAS3).